The primary structure comprises 154 residues: uncharacterized protein (154 aa).

This is an uncharacterized protein from Saccharomyces cerevisiae (strain ATCC 204508 / S288c) (Baker's yeast).